The following is a 451-amino-acid chain: Phosphoglucosamine mutase (451 aa).

Serine 102 functions as the Phosphoserine intermediate in the catalytic mechanism. Residues serine 102, aspartate 243, aspartate 245, and aspartate 247 each contribute to the Mg(2+) site. Serine 102 carries the phosphoserine modification.

This sequence belongs to the phosphohexose mutase family. Mg(2+) is required as a cofactor. Post-translationally, activated by phosphorylation.

The enzyme catalyses alpha-D-glucosamine 1-phosphate = D-glucosamine 6-phosphate. Functionally, catalyzes the conversion of glucosamine-6-phosphate to glucosamine-1-phosphate. This is Phosphoglucosamine mutase from Brucella anthropi (strain ATCC 49188 / DSM 6882 / CCUG 24695 / JCM 21032 / LMG 3331 / NBRC 15819 / NCTC 12168 / Alc 37) (Ochrobactrum anthropi).